The following is a 336-amino-acid chain: MYYPFVRKALFQLDPERAHEFTFQQLRRITGTPFEALVRQKVPAKPVNCMGLTFKNPLGLAAGLDKDGECIDALGAMGFGSIEIGTVTPRPQPGNDKPRLFRLVDAEGLINRMGFNNLGVDNLVENVKKAHYDGVLGINIGKNKDTPVEQGKDDYLICMEKIYAYAGYIAINISSPNTPGLRTLQYGEALDDLLTAIKNKQNDLQAMHHKYVPIAVKIAPDLSEEELIQVADSLVRHNIDGVIATNTTLDRSLVQGMKNCDQTGGLSGRPLQLKSTEIIRRLSQELNGRLPIIGVGGIDSVIAAREKIAAGASLVQIYSGFIFKGPPLIKEIVTHI.

Residues A62–K66 and T86 contribute to the FMN site. A substrate-binding site is contributed by K66. A substrate-binding site is contributed by N111–F115. N139 and N172 together coordinate FMN. N172 provides a ligand contact to substrate. S175 serves as the catalytic Nucleophile. A substrate-binding site is contributed by N177. Residues K217 and T245 each coordinate FMN. Residue N246–T247 participates in substrate binding. FMN-binding positions include G268, G297, and Y318–S319.

Belongs to the dihydroorotate dehydrogenase family. Type 2 subfamily. Monomer. Requires FMN as cofactor.

Its subcellular location is the cell membrane. The catalysed reaction is (S)-dihydroorotate + a quinone = orotate + a quinol. It functions in the pathway pyrimidine metabolism; UMP biosynthesis via de novo pathway; orotate from (S)-dihydroorotate (quinone route): step 1/1. Functionally, catalyzes the conversion of dihydroorotate to orotate with quinone as electron acceptor. This Escherichia coli O17:K52:H18 (strain UMN026 / ExPEC) protein is Dihydroorotate dehydrogenase (quinone).